The sequence spans 586 residues: Major facilitator superfamily domain-containing protein 6-like (586 aa).

Helical transmembrane passes span 50-70 and 78-98; these read ILMGTKHLIATCWIPFCAFLA and MFLTGSLLSSAGASLLMVLVP. The disordered stretch occupies residues 218–237; sequence GPVNLSKPQGDTQTPDHSSK. A compositionally biased stretch (polar residues) spans 223 to 237; it reads SKPQGDTQTPDHSSK. Transmembrane regions (helical) follow at residues 240–260, 284–304, 318–338, 365–385, 397–417, 428–448, 454–474, 494–514, and 519–538; these read PWTFILSLGVVVFWELLAAPL, LWVWKLLGVSAGVCGIAALVG, VIYFYSYSLVSTLALAVSTAF, LILLAFTVFWIGATASTVQDF, ELVMGFSVALSLLGEILFHPF, VGVLGLGLGCLALQVLYYAFI, VLPVQILSTISSGALWWAVGA, GHFYGSGCSLGSFVGGFVVLH, and VLYEACCVVLLLWLALFLSI.

Belongs to the major facilitator superfamily. MFSD6 family.

It localises to the membrane. The polypeptide is Major facilitator superfamily domain-containing protein 6-like (Mfsd6l) (Mus musculus (Mouse)).